The primary structure comprises 725 residues: Ribonuclease R (725 aa).

An RNB domain is found at 264–592 (RQDLTDLAFV…IHRLLWMHLF (329 aa)). The S1 motif domain occupies 644–725 (GKTFSGFISA…IQKRAILTLI (82 aa)).

This sequence belongs to the RNR ribonuclease family. RNase R subfamily.

The protein localises to the cytoplasm. The enzyme catalyses Exonucleolytic cleavage in the 3'- to 5'-direction to yield nucleoside 5'-phosphates.. Its function is as follows. 3'-5' exoribonuclease that releases 5'-nucleoside monophosphates and is involved in maturation of structured RNAs. The protein is Ribonuclease R of Mycoplasma genitalium (strain ATCC 33530 / DSM 19775 / NCTC 10195 / G37) (Mycoplasmoides genitalium).